Reading from the N-terminus, the 4377-residue chain is E3 ubiquitin-protein ligase HUWE1 (4377 aa).

Phosphoserine is present on residues Ser648 and Ser649. Disordered stretches follow at residues 706–758 (KADG…VVGT), 978–1001 (DEKAGTTQGGKRSDGEQDGTAGSM), and 1018–1038 (TLAPMETDEPSSSDSKGKSKI). Residues 725 to 735 (ASSEDEEEEEV) are compositionally biased toward acidic residues. A compositionally biased stretch (polar residues) spans 737–756 (AMQSFNSAQQNETEPNQQVV). Ser740 carries the post-translational modification Phosphoserine. Ser1084 carries the post-translational modification Phosphoserine. The span at 1291–1302 (LSKEKEGSRGEE) shows a compositional bias: basic and acidic residues. A disordered region spans residues 1291–1320 (LSKEKEGSRGEEEAGQEEGGSRREPQVNQQ). Positions 1316–1355 (QVNQQQLQQLMDMGFTREHAMEALLNTSTMEQATEYLLTH) constitute a UBA domain. Residues Ser1368, Ser1370, Ser1382, and Ser1395 each carry the phosphoserine modification. The UIM domain occupies 1370–1389 (SEEDQMMRAIAMSLGQDIPM). Positions 1396 to 1415 (PEEVACRKEEEERKAREKQE) are disordered. A WWE domain is found at 1603–1680 (RAQMTKYLQS…ETGNRRPVML (78 aa)). A disordered region spans residues 1690–1733 (KNSKSSNGQELEKTLEESKETDIKHKENKGNDIPLALESTNTEK). Basic and acidic residues predominate over residues 1699-1719 (ELEKTLEESKETDIKHKENKG). Ser1907 is subject to Phosphoserine. 3 disordered regions span residues 2019–2065 (APAE…SKPL), 2262–2343 (SLFG…QEMQ), and 2355–2479 (LLER…ASPL). Positions 2022-2033 (ETSTTGTSQGEA) are enriched in polar residues. Residue Thr2035 is modified to Phosphothreonine. Residues 2037-2057 (EETREGKKDKEGDRTSEEGKQ) show a composition bias toward basic and acidic residues. Low complexity-rich tracts occupy residues 2262–2271 (SLFGSKSASS) and 2278–2291 (DAQGASQDSSSHQQ). Ser2266 bears the Phosphoserine mark. At Lys2267 the chain carries N6-acetyllysine. Acidic residues-rich tracts occupy residues 2295 to 2306 (EPGEAEVQEEDH) and 2314 to 2325 (ADGDIMDGEAET). 3 positions are modified to phosphoserine: Ser2362, Ser2365, and Ser2391. Over residues 2388–2398 (SNLSQASTLQA) the composition is skewed to polar residues. The segment covering 2408–2472 (DPEDEEEHTQ…SEMELDEDYP (65 aa)) has biased composition (acidic residues). Residues Ser2527, Ser2532, and Ser2535 each carry the phosphoserine modification. Residue Thr2554 is modified to Phosphothreonine. A phosphoserine mark is found at Ser2584, Ser2595, and Ser2619. A compositionally biased stretch (basic and acidic residues) spans 2704–2716 (IIDKGKEDKENRD). Disordered stretches follow at residues 2704–2970 (IIDK…GVDP), 2991–3012 (IRPPTRSAPSSNSSAPAVVGNP), and 3036–3059 (QQRAEQQRRELAQNASSDTPMDPV). Over residues 2717–2736 (QSAQCTVTKTNDSTEQNVSD) the composition is skewed to polar residues. The span at 2738 to 2756 (TPMPDSYPTTPSSTDAPTS) shows a compositional bias: low complexity. The residue at position 2751 (Thr2751) is a Phosphothreonine. Polar residues-rich tracts occupy residues 2818 to 2835 (AETTQMELSPAPTITSLS), 2847 to 2864 (AVSSQLEGSPMDTSSLAS), and 2877 to 2890 (AGSSEQPTAGSSTP). Phosphoserine is present on residues Ser2826, Ser2833, Ser2835, Ser2861, Ser2887, and Ser2888. Thr2889 is modified (phosphothreonine). 2 stretches are compositionally biased toward low complexity: residues 2913–2932 (PPEDSSPPASSESSSTRDSA) and 2993–3007 (PPTRSAPSSNSSAPA). Residue Ser2918 is modified to Phosphoserine. Ser3116, Ser3117, Ser3122, Ser3127, and Ser3135 each carry phosphoserine. Arg3149 is modified (omega-N-methylarginine). 5 disordered regions span residues 3243 to 3266 (PKLSTSEERGKKSSKSCASSSHEN), 3352 to 3383 (TQQRTKETNCESDRERGSKQACSPCSSQSSSS), 3405 to 3429 (GKNSVKSVPVSSGGEGETSPHSLEA), 3471 to 3514 (SEVQ…TTPV), and 3539 to 3566 (TPTTATTTVSTSTTKGSKSPAKVGEGGS). Basic and acidic residues predominate over residues 3355–3369 (RTKETNCESDRERGS). Positions 3370–3383 (KQACSPCSSQSSSS) are enriched in low complexity. 2 stretches are compositionally biased toward low complexity: residues 3475–3503 (TNSSNSGSSTAATSNTSTTTTTTTTATAP) and 3539–3552 (TPTTATTTVSTSTT). A phosphoserine mark is found at Ser3557, Ser3663, Ser3753, Ser3758, Ser3760, and Ser3761. The segment at 3738–3759 (TRRANKKAKQTGRLGSSGLGSA) is disordered. A compositionally biased stretch (low complexity) spans 3749 to 3759 (GRLGSSGLGSA). Disordered regions lie at residues 3782-3850 (EGQR…LPLL) and 3897-3951 (RESK…SSSL). Residues 3794-3803 (TSESSNQSET) are compositionally biased toward polar residues. Phosphoserine occurs at positions 3810, 3818, and 3830. Residues 3817 to 3828 (PSPSAQDTQSIV) are compositionally biased toward polar residues. A Phosphothreonine modification is found at Thr3833. 2 stretches are compositionally biased toward basic and acidic residues: residues 3836 to 3845 (GEKEKEEKPP) and 3897 to 3918 (RESKPPVRDTRESQLAHIKDEP). Phosphoserine is present on residues Ser3909 and Ser3922. Residues 3919–3928 (PPLSPAPLTP) are compositionally biased toward pro residues. Thr3927 and Thr3930 each carry phosphothreonine. A compositionally biased stretch (polar residues) spans 3941–3951 (EPSSMHISSSL). In terms of domain architecture, HECT spans 4041 to 4377 (SPEEMKNRLY…QECSEGFGLA (337 aa)). Tyr4274 bears the Phosphotyrosine mark. Cys4344 functions as the Glycyl thioester intermediate in the catalytic mechanism.

The protein belongs to the UPL family. TOM1/PTR1 subfamily. In terms of assembly, interacts with isoform p19ARF of CDKN2A which strongly inhibits HUWE1 ubiquitin ligase activity. Interacts with MYCN, POLB and CDC6. Interacts with PA2G4. Interacts with NR1D1. Interacts with AMBRA1. Interacts with HAPSTR1. Interacts with HAPSTR2. In hepatocytes, interacts with PAQR3; the interaction promotes PPARA poylubiquitination and STUB1-mediated degradation. Phosphorylated on tyrosine; phosphorylation is probably required for its ability to inhibit TP53 transactivation. In terms of tissue distribution, widely expressed.

Its subcellular location is the cytoplasm. The protein resides in the nucleus. The protein localises to the mitochondrion. It carries out the reaction S-ubiquitinyl-[E2 ubiquitin-conjugating enzyme]-L-cysteine + [acceptor protein]-L-lysine = [E2 ubiquitin-conjugating enzyme]-L-cysteine + N(6)-ubiquitinyl-[acceptor protein]-L-lysine.. It functions in the pathway protein modification; protein ubiquitination. Its function is as follows. E3 ubiquitin-protein ligase which mediates ubiquitination and subsequent proteasomal degradation of target proteins. Regulates apoptosis by catalyzing the polyubiquitination and degradation of MCL1. Mediates monoubiquitination of DNA polymerase beta (POLB) at 'Lys-41', 'Lys-61' and 'Lys-81', thereby playing a role in base-excision repair. Also ubiquitinates the p53/TP53 tumor suppressor and core histones including H1, H2A, H2B, H3 and H4. Ubiquitinates MFN2 to negatively regulate mitochondrial fusion in response to decreased stearoylation of TFRC. Ubiquitination of MFN2 also takes place following induction of mitophagy; AMBRA1 acts as a cofactor for HUWE1-mediated ubiquitination. Regulates neural differentiation and proliferation by catalyzing the polyubiquitination and degradation of MYCN. May regulate abundance of CDC6 after DNA damage by polyubiquitinating and targeting CDC6 to degradation. Mediates polyubiquitination of PA2G4. Acts in concert with MYCBP2 to regulate the circadian clock gene expression by promoting the lithium-induced ubiquination and degradation of NR1D1. Binds to an upstream initiator-like sequence in the preprodynorphin gene. Mediates HAPSTR1 degradation, but is also a required cofactor in the pathway by which HAPSTR1 governs stress signaling. Acts as a regulator of the JNK and NF-kappa-B signaling pathways by mediating assembly of heterotypic 'Lys-63'-/'Lys-48'-linked branched ubiquitin chains that are then recognized by TAB2: HUWE1 mediates branching of 'Lys-48'-linked chains of substrates initially modified with 'Lys-63'-linked conjugates by TRAF6. 'Lys-63'-/'Lys-48'-linked branched ubiquitin chains protect 'Lys-63'-linkages from CYLD deubiquitination. Ubiquitinates PPARA in hepatocytes. This chain is E3 ubiquitin-protein ligase HUWE1 (Huwe1), found in Mus musculus (Mouse).